The chain runs to 188 residues: UPF0301 protein Smal_0940 (188 aa).

Belongs to the UPF0301 (AlgH) family.

This chain is UPF0301 protein Smal_0940, found in Stenotrophomonas maltophilia (strain R551-3).